The chain runs to 426 residues: Tol-Pal system protein TolB (426 aa).

A signal peptide spans 1-24 (MKLKSRFTSIIGVITLFFSQTVTA).

It belongs to the TolB family. The Tol-Pal system is composed of five core proteins: the inner membrane proteins TolA, TolQ and TolR, the periplasmic protein TolB and the outer membrane protein Pal. They form a network linking the inner and outer membranes and the peptidoglycan layer.

It is found in the periplasm. Part of the Tol-Pal system, which plays a role in outer membrane invagination during cell division and is important for maintaining outer membrane integrity. The polypeptide is Tol-Pal system protein TolB (Actinobacillus pleuropneumoniae serotype 5b (strain L20)).